The chain runs to 124 residues: Small ribosomal subunit protein uS13 (124 aa).

The tract at residues 95 to 124 (GLPVRGQRTKTNARTRKGPKRTIAGKKKAR) is disordered.

This sequence belongs to the universal ribosomal protein uS13 family. In terms of assembly, part of the 30S ribosomal subunit. Forms a loose heterodimer with protein S19. Forms two bridges to the 50S subunit in the 70S ribosome.

Functionally, located at the top of the head of the 30S subunit, it contacts several helices of the 16S rRNA. In the 70S ribosome it contacts the 23S rRNA (bridge B1a) and protein L5 of the 50S subunit (bridge B1b), connecting the 2 subunits; these bridges are implicated in subunit movement. Contacts the tRNAs in the A and P-sites. The polypeptide is Small ribosomal subunit protein uS13 (Mycobacterium marinum (strain ATCC BAA-535 / M)).